An 87-amino-acid polypeptide reads, in one-letter code: MRRGIHPEYRPVVYRDRAADFAFLTRSTATSEQTIEWTDGNTYPVVDVQISSASHPFWTGRQRLVDAAGRVEKFRAKYARRGPQRHR.

Belongs to the bacterial ribosomal protein bL31 family. Type B subfamily. In terms of assembly, part of the 50S ribosomal subunit.

This is Large ribosomal subunit protein bL31B from Salinispora arenicola (strain CNS-205).